A 139-amino-acid polypeptide reads, in one-letter code: Nucleoside diphosphate kinase (139 aa).

ATP contacts are provided by lysine 11, phenylalanine 59, arginine 87, threonine 93, arginine 104, and asparagine 114. Catalysis depends on histidine 117, which acts as the Pros-phosphohistidine intermediate.

The protein belongs to the NDK family. In terms of assembly, homotetramer. It depends on Mg(2+) as a cofactor.

It is found in the cytoplasm. It carries out the reaction a 2'-deoxyribonucleoside 5'-diphosphate + ATP = a 2'-deoxyribonucleoside 5'-triphosphate + ADP. The enzyme catalyses a ribonucleoside 5'-diphosphate + ATP = a ribonucleoside 5'-triphosphate + ADP. In terms of biological role, major role in the synthesis of nucleoside triphosphates other than ATP. The ATP gamma phosphate is transferred to the NDP beta phosphate via a ping-pong mechanism, using a phosphorylated active-site intermediate. This is Nucleoside diphosphate kinase from Pasteurella multocida (strain Pm70).